A 456-amino-acid chain; its full sequence is RuvB-like helicase 1 (456 aa).

ATP is bound at residue 70–77 (GPPGTGKT).

This sequence belongs to the RuvB family. In terms of assembly, forms homohexameric rings. May form a dodecamer with rept made of two stacked hexameric rings. Component of the chromatin remodeling Ino80 complex.

The protein resides in the nucleus. The enzyme catalyses ATP + H2O = ADP + phosphate + H(+). Acts as a transcriptional coactivator in Wg signaling. Functionally, proposed core component of the chromatin remodeling Ino80 complex which is involved in transcriptional regulation, DNA replication and probably DNA repair. This Aedes aegypti (Yellowfever mosquito) protein is RuvB-like helicase 1.